We begin with the raw amino-acid sequence, 296 residues long: MPWQSVRILVDSVQAEPLSDALMEAGALSVSLEDADAGTVDETPLFGEPDHPSAELWPHSIAVVLLEADADVAETLRAAAAQAGVAAPLDYTVETVAEQDWVRLTQSQFDPIPISARLWIVPTWHEAPDSRALNLKLDPGLAFGTGSHPTTRLCLRWLDANLRGGETLLDYGCGSGILAIAAAKLGARRVEGVDIDPQAVSASRDNAALNEVDAHFGLPGELAAGEYDVVVANILTNPLKAMAPLLAGRVRSGGSLVLSGILAEQAEDVMAVYRPWFVFDAPASDEGWVRLVGVKR.

Residues Thr-151, Gly-172, Asp-194, and Asn-233 each coordinate S-adenosyl-L-methionine.

It belongs to the methyltransferase superfamily. PrmA family.

Its subcellular location is the cytoplasm. It carries out the reaction L-lysyl-[protein] + 3 S-adenosyl-L-methionine = N(6),N(6),N(6)-trimethyl-L-lysyl-[protein] + 3 S-adenosyl-L-homocysteine + 3 H(+). Its function is as follows. Methylates ribosomal protein L11. This chain is Ribosomal protein L11 methyltransferase, found in Thiobacillus denitrificans (strain ATCC 25259 / T1).